Consider the following 302-residue polypeptide: Probable alpha-L-glutamate ligase (302 aa).

One can recognise an ATP-grasp domain in the interval 105–288; sequence LQLLARKGIP…LAGKIIEYIE (184 aa). Residues Lys-142, 179–180, Asp-188, and 212–214 each bind ATP; these read EF and RAN. 3 residues coordinate Mg(2+): Asp-249, Glu-261, and Asn-263. The Mn(2+) site is built by Asp-249, Glu-261, and Asn-263.

This sequence belongs to the RimK family. Mg(2+) serves as cofactor. Requires Mn(2+) as cofactor.

This Legionella pneumophila (strain Paris) protein is Probable alpha-L-glutamate ligase.